Here is a 247-residue protein sequence, read N- to C-terminus: Probable transcriptional regulatory protein YebC (247 aa).

The interval 1–20 (MAGHSKWANTRHRKAAQDAK) is disordered.

It belongs to the TACO1 family.

It localises to the cytoplasm. In Salmonella arizonae (strain ATCC BAA-731 / CDC346-86 / RSK2980), this protein is Probable transcriptional regulatory protein YebC.